The primary structure comprises 691 residues: DNA ligase (691 aa).

NAD(+) is bound by residues 53–57, 102–103, and Glu135; these read DSEYD and SL. Lys137 functions as the N6-AMP-lysine intermediate in the catalytic mechanism. The NAD(+) site is built by Arg158, Glu195, Lys310, and Lys334. Zn(2+)-binding residues include Cys428, Cys431, Cys446, and Cys452. In terms of domain architecture, BRCT spans 613-691; it reads SEGLPLDGQT…EEEFLALVGE (79 aa).

This sequence belongs to the NAD-dependent DNA ligase family. LigA subfamily. It depends on Mg(2+) as a cofactor. Mn(2+) is required as a cofactor.

The enzyme catalyses NAD(+) + (deoxyribonucleotide)n-3'-hydroxyl + 5'-phospho-(deoxyribonucleotide)m = (deoxyribonucleotide)n+m + AMP + beta-nicotinamide D-nucleotide.. In terms of biological role, DNA ligase that catalyzes the formation of phosphodiester linkages between 5'-phosphoryl and 3'-hydroxyl groups in double-stranded DNA using NAD as a coenzyme and as the energy source for the reaction. It is essential for DNA replication and repair of damaged DNA. This Psychrobacter arcticus (strain DSM 17307 / VKM B-2377 / 273-4) protein is DNA ligase.